Here is a 657-residue protein sequence, read N- to C-terminus: DNA mismatch repair protein MutL (657 aa).

The protein belongs to the DNA mismatch repair MutL/HexB family.

This protein is involved in the repair of mismatches in DNA. It is required for dam-dependent methyl-directed DNA mismatch repair. May act as a 'molecular matchmaker', a protein that promotes the formation of a stable complex between two or more DNA-binding proteins in an ATP-dependent manner without itself being part of a final effector complex. This Streptococcus agalactiae serotype III (strain NEM316) protein is DNA mismatch repair protein MutL.